A 632-amino-acid polypeptide reads, in one-letter code: MNAPVNKQMVVDAAAIQPLPNSRKIYVEGSRPDIQVPMREIRQADTPTQFGGEKNPPIFVYDTSGPYSDPAARIDIQSGLAPLRAAWIAQRGDCEQLPGLSSEYGRAREADPKLAELRFNLQRKPRRAKAGRNVTQMHYARRGIVTPEMEFVAIRENLNRRAYVESLQAAGNRRLLDLMTRQHQGQSFGAHLPEEITPEFVREEIAAGRAIIPANINHPESEPMIIGRNFLVKINGNIGNSAVTSSISEEVDKMTWGIRWGADTIMDLSTGKNIHETREWILRNSPVPIGTVPIYQALEKVNGKAEDLSWEIFRDTLIEQAEQGVDYFTIHAGVRLAYVPMTANRMTGIVSRGGSIMAKWCLAHHRENFLYTHFEDICEIMKAYDVAFSLGDGLRPGSAWDANDEAQLSELKTLGELTEIAWKHDVQVMIEGPGHVPMQLIKENMDKELEWCREAPFYTLGPLTTDIAPGYDHITSAIGAAQIGWYGTAMLCYVTQKEHLGLPNKHDVKEGIITYKLAAHAADLAKGHPGAQIRDNALSKARFEFRWEDQFNLGLDPDKARDFHDETLPKDSAKVAHFCSMCGPHFCSMKITQDVREYAASQGVGEQDALRLGMREKAIEFVKGGGKLYDKV.

Residues N237, M266, Y295, H331, 351-353 (SRG), 392-395 (DGLR), and E431 contribute to the substrate site. H435 contributes to the Zn(2+) binding site. Residue Y458 coordinates substrate. H499 is a binding site for Zn(2+). Residues C579, C582, and C587 each coordinate [4Fe-4S] cluster.

Belongs to the ThiC family. In terms of assembly, homodimer. The cofactor is [4Fe-4S] cluster.

It carries out the reaction 5-amino-1-(5-phospho-beta-D-ribosyl)imidazole + S-adenosyl-L-methionine = 4-amino-2-methyl-5-(phosphooxymethyl)pyrimidine + CO + 5'-deoxyadenosine + formate + L-methionine + 3 H(+). Its pathway is cofactor biosynthesis; thiamine diphosphate biosynthesis. Its function is as follows. Catalyzes the synthesis of the hydroxymethylpyrimidine phosphate (HMP-P) moiety of thiamine from aminoimidazole ribotide (AIR) in a radical S-adenosyl-L-methionine (SAM)-dependent reaction. This Chromobacterium violaceum (strain ATCC 12472 / DSM 30191 / JCM 1249 / CCUG 213 / NBRC 12614 / NCIMB 9131 / NCTC 9757 / MK) protein is Phosphomethylpyrimidine synthase.